A 403-amino-acid chain; its full sequence is tRNA(Met) cytidine acetate ligase (403 aa).

ATP is bound by residues 7-20 (VVEYNPFHNGHAYH), Gly-101, Asn-164, and 189-190 (RI).

This sequence belongs to the TmcAL family.

It is found in the cytoplasm. The catalysed reaction is cytidine(34) in elongator tRNA(Met) + acetate + ATP = N(4)-acetylcytidine(34) in elongator tRNA(Met) + AMP + diphosphate. In terms of biological role, catalyzes the formation of N(4)-acetylcytidine (ac(4)C) at the wobble position of elongator tRNA(Met), using acetate and ATP as substrates. First activates an acetate ion to form acetyladenylate (Ac-AMP) and then transfers the acetyl group to tRNA to form ac(4)C34. The protein is tRNA(Met) cytidine acetate ligase of Lysinibacillus sphaericus (strain C3-41).